We begin with the raw amino-acid sequence, 117 residues long: UPF0342 protein BcerKBAB4_0767 (117 aa).

It belongs to the UPF0342 family.

The protein is UPF0342 protein BcerKBAB4_0767 of Bacillus mycoides (strain KBAB4) (Bacillus weihenstephanensis).